Here is a 128-residue protein sequence, read N- to C-terminus: Elongation factor G (128 aa).

This sequence belongs to the GTP-binding elongation factor family. EF-G/EF-2 subfamily.

It is found in the cytoplasm. Its function is as follows. Catalyzes the GTP-dependent ribosomal translocation step during translation elongation. During this step, the ribosome changes from the pre-translocational (PRE) to the post-translocational (POST) state as the newly formed A-site-bound peptidyl-tRNA and P-site-bound deacylated tRNA move to the P and E sites, respectively. Catalyzes the coordinated movement of the two tRNA molecules, the mRNA and conformational changes in the ribosome. The protein is Elongation factor G (fusA) of Planobispora rosea.